Reading from the N-terminus, the 377-residue chain is MMEFTIKRDYFINQLNDTLKAISPRTTLPILTGIKIDAKENEVILTGSDSEISIEITIPKQVDGEEIVEITETGSVVLPGRFFVDIIKKLPGKEVKLSTNEQFQTLITSGHSEFNLSGLDPDQYPLLPEVSRDDAIQLSVKVLKNIIAQTNFAVSTSETRPVLTGVNWLIQDNELICTATDSHRLAVRKLQLEDESENKNVIIPGKALSELNKIMSDSDEDIDIFFASNQVLFRVGNINFISRLLEGHYPDTTRLFPENYEIKLGINNGDFYHAIDRASLLAREGGNNVIKLSTGNELVELSSTSPEIGTVKEEVNANDVEGGNLKISFNSKYMMDALKAIDNDEVEVEFFGTMKPFILKPKDDDSVTQLILPIRTY.

This sequence belongs to the beta sliding clamp family. As to quaternary structure, forms a ring-shaped head-to-tail homodimer around DNA which binds and tethers DNA polymerases and other proteins to the DNA. The DNA replisome complex has a single clamp-loading complex (3 tau and 1 each of delta, delta', psi and chi subunits) which binds 3 Pol III cores (1 core on the leading strand and 2 on the lagging strand) each with a beta sliding clamp dimer. Additional proteins in the replisome are other copies of gamma, psi and chi, Ssb, DNA helicase and RNA primase.

Its subcellular location is the cytoplasm. Functionally, confers DNA tethering and processivity to DNA polymerases and other proteins. Acts as a clamp, forming a ring around DNA (a reaction catalyzed by the clamp-loading complex) which diffuses in an ATP-independent manner freely and bidirectionally along dsDNA. Initially characterized for its ability to contact the catalytic subunit of DNA polymerase III (Pol III), a complex, multichain enzyme responsible for most of the replicative synthesis in bacteria; Pol III exhibits 3'-5' exonuclease proofreading activity. The beta chain is required for initiation of replication as well as for processivity of DNA replication. This is Beta sliding clamp (dnaN) from Staphylococcus epidermidis (strain ATCC 35984 / DSM 28319 / BCRC 17069 / CCUG 31568 / BM 3577 / RP62A).